The following is a 567-amino-acid chain: Proline--tRNA ligase (567 aa).

Belongs to the class-II aminoacyl-tRNA synthetase family. ProS type 1 subfamily. In terms of assembly, homodimer.

The protein resides in the cytoplasm. It carries out the reaction tRNA(Pro) + L-proline + ATP = L-prolyl-tRNA(Pro) + AMP + diphosphate. In terms of biological role, catalyzes the attachment of proline to tRNA(Pro) in a two-step reaction: proline is first activated by ATP to form Pro-AMP and then transferred to the acceptor end of tRNA(Pro). As ProRS can inadvertently accommodate and process non-cognate amino acids such as alanine and cysteine, to avoid such errors it has two additional distinct editing activities against alanine. One activity is designated as 'pretransfer' editing and involves the tRNA(Pro)-independent hydrolysis of activated Ala-AMP. The other activity is designated 'posttransfer' editing and involves deacylation of mischarged Ala-tRNA(Pro). The misacylated Cys-tRNA(Pro) is not edited by ProRS. In Staphylococcus aureus (strain MRSA252), this protein is Proline--tRNA ligase.